Reading from the N-terminus, the 201-residue chain is Probable quinol oxidase subunit 3 (201 aa).

A run of 5 helical transmembrane segments spans residues L20–L40, L62–Y82, L91–I111, F133–C153, and F180–S200.

The protein belongs to the cytochrome c oxidase subunit 3 family.

The protein resides in the cell membrane. It carries out the reaction 2 a quinol + O2 = 2 a quinone + 2 H2O. Its function is as follows. Catalyzes quinol oxidation with the concomitant reduction of oxygen to water. This chain is Probable quinol oxidase subunit 3 (qoxC), found in Staphylococcus saprophyticus subsp. saprophyticus (strain ATCC 15305 / DSM 20229 / NCIMB 8711 / NCTC 7292 / S-41).